Here is a 363-residue protein sequence, read N- to C-terminus: S-adenosylmethionine:tRNA ribosyltransferase-isomerase (363 aa).

Belongs to the QueA family. In terms of assembly, monomer.

The protein resides in the cytoplasm. It catalyses the reaction 7-aminomethyl-7-carbaguanosine(34) in tRNA + S-adenosyl-L-methionine = epoxyqueuosine(34) in tRNA + adenine + L-methionine + 2 H(+). Its pathway is tRNA modification; tRNA-queuosine biosynthesis. In terms of biological role, transfers and isomerizes the ribose moiety from AdoMet to the 7-aminomethyl group of 7-deazaguanine (preQ1-tRNA) to give epoxyqueuosine (oQ-tRNA). The sequence is that of S-adenosylmethionine:tRNA ribosyltransferase-isomerase from Magnetococcus marinus (strain ATCC BAA-1437 / JCM 17883 / MC-1).